The following is a 120-amino-acid chain: Ribosome-binding factor A (120 aa).

Belongs to the RbfA family. Monomer. Binds 30S ribosomal subunits, but not 50S ribosomal subunits or 70S ribosomes.

Its subcellular location is the cytoplasm. Functionally, one of several proteins that assist in the late maturation steps of the functional core of the 30S ribosomal subunit. Associates with free 30S ribosomal subunits (but not with 30S subunits that are part of 70S ribosomes or polysomes). Required for efficient processing of 16S rRNA. May interact with the 5'-terminal helix region of 16S rRNA. The chain is Ribosome-binding factor A from Rickettsia conorii (strain ATCC VR-613 / Malish 7).